We begin with the raw amino-acid sequence, 609 residues long: 2',5'-phosphodiesterase 12 (609 aa).

A mitochondrion-targeting transit peptide spans 1–16 (MWRLPGVRAALRGVRT). The segment at 203-231 (PRAAEPEGGGPSSSSPSSPSPGWTETGVD) is disordered. Over residues 214 to 224 (SSSSPSSPSPG) the composition is skewed to low complexity. A Phosphoserine modification is found at Ser217. Positions 351, 496, and 498 each coordinate Mg(2+). Asp496 (proton donor/acceptor) is an active-site residue.

It belongs to the CCR4/nocturin family. It depends on Mg(2+) as a cofactor. As to expression, liver.

The protein resides in the mitochondrion matrix. The enzyme catalyses Exonucleolytic cleavage of poly(A) to 5'-AMP.. Functionally, enzyme that cleaves 2',5'-phosphodiester bond linking adenosines of the 5'-triphosphorylated oligoadenylates, triphosphorylated oligoadenylates referred as 2-5A modulates the 2-5A system. Degrades triphosphorylated 2-5A to produce AMP and ATP. Also cleaves 3',5'-phosphodiester bond of oligoadenylates. Plays a role as a negative regulator of the 2-5A system that is one of the major pathways for antiviral and antitumor functions induced by interferons (IFNs). Suppression of this enzyme increases cellular 2-5A levels and decreases viral replication in cultured small-airway epithelial cells. This Bos taurus (Bovine) protein is 2',5'-phosphodiesterase 12 (PDE12).